The sequence spans 108 residues: Transcription factor S (108 aa).

Residues Cys-5, Cys-8, Cys-21, Cys-24, Cys-69, Cys-72, Cys-97, and Cys-100 each coordinate Zn(2+). A C4-type zinc finger spans residues 5-24; it reads CPKCNNLMLPKDGKLKCAVC. A TFIIS-type zinc finger spans residues 65–105; sequence TRIECPKCGHNEAYWWLQQTRCADEPETRFYKCKKCGHTWR.

The protein belongs to the archaeal RpoM/eukaryotic RPA12/RPB9/RPC11 RNA polymerase family.

In terms of biological role, induces RNA cleavage activity in the RNA polymerase. In its presence, the cleavage activity of the RNA polymerase truncates the RNA back to position +15 in a stepwise manner by releasing mainly dinucleotides from the 3'-end of the nascent RNA. The truncated RNAs are able to continue elongation. Involved in transcriptional proofreading and fidelity. Misincorporation of nucleotides during elongation of transcription leads to arrested elongation complexes which are rescued by TFS-promoted removal of a dinucleotide from the 3'-end. TFS is able to induce a cleavage resynthesis cycle in stalled elongation complexes (resulting from the next missing nucleotide or a reduced incorporation rate of a wrong nucleotide) preventing misincorporation and enabling proofreading in a post-incorporation manner. Pausing of elongation complexes is the main determinant of TFS-induced RNA cleavage. This chain is Transcription factor S, found in Methanocaldococcus jannaschii (strain ATCC 43067 / DSM 2661 / JAL-1 / JCM 10045 / NBRC 100440) (Methanococcus jannaschii).